The sequence spans 866 residues: Protein mono-ADP-ribosyltransferase PARP9 (866 aa).

At S42 the chain carries Phosphoserine. Macro domains follow at residues 109-298 (QRVF…ESIL) and 313-492 (ASTM…TKRS). A PARP catalytic domain is found at 635 to 853 (TNQQEKLDKM…YSSGPGMVSS (219 aa)).

It belongs to the ARTD/PARP family. As to quaternary structure, forms a stable complex with E3 ligase DTX3L; the interaction is required for PARP9 mediated ADP-ribosylation of ubiquitin. Interacts (via PARP catalytic domain) with DTX3L (via N-terminus). Forms a complex with STAT1 and DTX3L independently of IFNB1 or IFNG-mediated STAT1 'Tyr-701' phosphorylation. Forms a complex with STAT1, DTX3L and histone H2B H2BC9/H2BJ; the interaction is likely to induce H2BC9/H2BJ ubiquitination. Interacts (via N-terminus) with STAT1. Interacts with PARP14 in IFNG-stimulated macrophages; the interaction prevents PARP14-mediated STAT1 and STAT6 ADP-riboslylation. Interacts with PARP1 (when poly-ADP-ribosylated). In terms of processing, ADP-ribosylated by PARP14. In terms of tissue distribution, highly expressed in the thymus and intestine. Expressed in macrophages.

Its subcellular location is the cytoplasm. The protein localises to the cytosol. It localises to the nucleus. It catalyses the reaction [protein]-C-terminal glycine + NAD(+) = [protein]-C-terminal O-(ADP-D-ribosyl)-glycine + nicotinamide. Binding to poly(ADP-ribose) does not affect its activity. ADP-ribosyltransferase which, in association with E3 ligase DTX3L, plays a role in DNA damage repair and in immune responses including interferon-mediated antiviral defenses. Within the complex, enhances DTX3L E3 ligase activity which is further enhanced by PARP9 binding to poly(ADP-ribose). In addition, positively regulates DTXL3 protein levels. In association with DTX3L and in presence of E1 and E2 enzymes, mediates NAD(+)-dependent mono-ADP-ribosylation of ubiquitin which prevents ubiquitin conjugation to substrates such as histones. During DNA repair, PARP1 recruits PARP9/BAL1-DTX3L complex to DNA damage sites via PARP9 binding to ribosylated PARP1. Subsequent PARP1-dependent PARP9/BAL1-DTX3L-mediated ubiquitination promotes the rapid and specific recruitment of 53BP1/TP53BP1, UIMC1/RAP80, and BRCA1 to DNA damage sites. In response to DNA damage, PARP9-DTX3L complex is required for efficient non-homologous end joining (NHEJ) but the complex function is restrained by PARP9 activity. Dispensable for B-cell receptor (BCR) assembly through V(D)J recombination and class switch recombination (CSR). In macrophages, positively regulates pro-inflammatory cytokines production in response to IFNG stimulation by suppressing PARP14-mediated STAT1 ADP-ribosylation and thus promoting STAT1 phosphorylation. Also suppresses PARP14-mediated STAT6 ADP-ribosylation. This is Protein mono-ADP-ribosyltransferase PARP9 (Parp9) from Mus musculus (Mouse).